Here is a 193-residue protein sequence, read N- to C-terminus: uncharacterized protein (193 aa).

An AMMECR1 domain is found at 1-189 (MDKKEYCYYC…CTYEEYLHNL (189 aa)).

This is an uncharacterized protein from Schizosaccharomyces pombe (strain 972 / ATCC 24843) (Fission yeast).